The chain runs to 957 residues: Glycine dehydrogenase (decarboxylating) (957 aa).

At K702 the chain carries N6-(pyridoxal phosphate)lysine.

It belongs to the GcvP family. The glycine cleavage system is composed of four proteins: P, T, L and H. It depends on pyridoxal 5'-phosphate as a cofactor.

It carries out the reaction N(6)-[(R)-lipoyl]-L-lysyl-[glycine-cleavage complex H protein] + glycine + H(+) = N(6)-[(R)-S(8)-aminomethyldihydrolipoyl]-L-lysyl-[glycine-cleavage complex H protein] + CO2. The glycine cleavage system catalyzes the degradation of glycine. The P protein binds the alpha-amino group of glycine through its pyridoxal phosphate cofactor; CO(2) is released and the remaining methylamine moiety is then transferred to the lipoamide cofactor of the H protein. The sequence is that of Glycine dehydrogenase (decarboxylating) from Bradyrhizobium sp. (strain BTAi1 / ATCC BAA-1182).